The sequence spans 655 residues: p-hydroxybenzoic acid efflux pump subunit AaeB (655 aa).

Transmembrane regions (helical) follow at residues 13-33 (FAVK…HFQL), 38-58 (WAVL…GGEP), 69-89 (LRII…IAMI), 93-113 (LLMI…SSLV), 121-141 (WGLA…EPLL), 152-172 (EIVI…PRSI), 370-390 (LFWL…IAVV), 407-427 (FIYG…VIIP), 431-451 (QSML…GIEV), 459-479 (MGAL…TFHF), and 482-502 (FLDS…VILL).

This sequence belongs to the aromatic acid exporter ArAE (TC 2.A.85) family.

The protein localises to the cell inner membrane. Functionally, forms an efflux pump with AaeA. Could function as a metabolic relief valve, allowing to eliminate certain compounds when they accumulate to high levels in the cell. This Escherichia coli O81 (strain ED1a) protein is p-hydroxybenzoic acid efflux pump subunit AaeB.